We begin with the raw amino-acid sequence, 437 residues long: Elongation factor 1-gamma-B (437 aa).

A GST N-terminal domain is found at A2 to S87. Residues N89–F222 form the GST C-terminal domain. Residues V225–E240 show a composition bias toward basic and acidic residues. The disordered stretch occupies residues V225–P279. Over residues P241–A251 the composition is skewed to basic residues. Positions S266–P279 are enriched in basic and acidic residues. The EF-1-gamma C-terminal domain occupies S276–K437.

As to quaternary structure, EF-1 is composed of four subunits: alpha, beta, delta, and gamma.

Its function is as follows. Probably plays a role in anchoring the complex to other cellular components. The protein is Elongation factor 1-gamma-B (eef1g-b) of Xenopus laevis (African clawed frog).